A 653-amino-acid chain; its full sequence is Structural protein ORF653 (653 aa).

A coiled-coil region spans residues 300-330 (AKEETKQETKQETGKEEEEKKETKQESQEQL). Over residues 302–326 (EETKQETKQETGKEEEEKKETKQES) the composition is skewed to basic and acidic residues. Disordered regions lie at residues 302–329 (EETKQETKQETGKEEEEKKETKQESQEQ), 344–388 (GQPA…ENTP), and 626–653 (AGQQEETDETTEEEEEEEEEGNDTVKLS). Residues 371–381 (EENNAEAPQQR) are compositionally biased toward low complexity. A coiled-coil region spans residues 505–649 (KEQELYKELD…EEEEEEGNDT (145 aa)). The span at 630–647 (EETDETTEEEEEEEEEGN) shows a compositional bias: acidic residues.

The protein resides in the virion. The protein is Structural protein ORF653 of Acidianus two-tailed virus (ATV).